Reading from the N-terminus, the 997-residue chain is FHIP family protein CPIJ015043 (997 aa).

2 disordered regions span residues aspartate 558–glutamine 579 and asparagine 759–alanine 922. The segment covering glutamine 569–glutamine 579 has biased composition (low complexity). Gly residues predominate over residues glycine 763–glycine 780. 2 stretches are compositionally biased toward low complexity: residues serine 781–proline 792 and glycine 830–serine 889. Gly residues predominate over residues isoleucine 911–alanine 922.

The protein belongs to the FHIP family.

This chain is FHIP family protein CPIJ015043, found in Culex quinquefasciatus (Southern house mosquito).